A 712-amino-acid chain; its full sequence is Ribosomal RNA large subunit methyltransferase K/L (712 aa).

One can recognise a THUMP domain in the interval 46–157 (GAYQALLHSR…REKLIVSLDL (112 aa)).

It belongs to the methyltransferase superfamily. RlmKL family.

It localises to the cytoplasm. The catalysed reaction is guanosine(2445) in 23S rRNA + S-adenosyl-L-methionine = N(2)-methylguanosine(2445) in 23S rRNA + S-adenosyl-L-homocysteine + H(+). It carries out the reaction guanosine(2069) in 23S rRNA + S-adenosyl-L-methionine = N(2)-methylguanosine(2069) in 23S rRNA + S-adenosyl-L-homocysteine + H(+). In terms of biological role, specifically methylates the guanine in position 2445 (m2G2445) and the guanine in position 2069 (m7G2069) of 23S rRNA. The polypeptide is Ribosomal RNA large subunit methyltransferase K/L (Haemophilus ducreyi (strain 35000HP / ATCC 700724)).